A 252-amino-acid polypeptide reads, in one-letter code: Triosephosphate isomerase (252 aa).

A substrate-binding site is contributed by 9–11 (NWK). Catalysis depends on His95, which acts as the Electrophile. Glu167 functions as the Proton acceptor in the catalytic mechanism. Residues Gly173, Ser213, and 234–235 (GG) each bind substrate.

Belongs to the triosephosphate isomerase family. In terms of assembly, homodimer.

It is found in the cytoplasm. The catalysed reaction is D-glyceraldehyde 3-phosphate = dihydroxyacetone phosphate. Its pathway is carbohydrate biosynthesis; gluconeogenesis. It functions in the pathway carbohydrate degradation; glycolysis; D-glyceraldehyde 3-phosphate from glycerone phosphate: step 1/1. Its function is as follows. Involved in the gluconeogenesis. Catalyzes stereospecifically the conversion of dihydroxyacetone phosphate (DHAP) to D-glyceraldehyde-3-phosphate (G3P). The sequence is that of Triosephosphate isomerase from Lactiplantibacillus plantarum (strain ATCC BAA-793 / NCIMB 8826 / WCFS1) (Lactobacillus plantarum).